We begin with the raw amino-acid sequence, 295 residues long: 4-hydroxy-tetrahydrodipicolinate synthase 1 (295 aa).

Thr46 is a binding site for pyruvate. Catalysis depends on Tyr134, which acts as the Proton donor/acceptor. Lys162 (schiff-base intermediate with substrate) is an active-site residue. Val204 serves as a coordination point for pyruvate.

Belongs to the DapA family. In terms of assembly, homotetramer; dimer of dimers.

The protein resides in the cytoplasm. It catalyses the reaction L-aspartate 4-semialdehyde + pyruvate = (2S,4S)-4-hydroxy-2,3,4,5-tetrahydrodipicolinate + H2O + H(+). Its pathway is amino-acid biosynthesis; L-lysine biosynthesis via DAP pathway; (S)-tetrahydrodipicolinate from L-aspartate: step 3/4. In terms of biological role, catalyzes the condensation of (S)-aspartate-beta-semialdehyde [(S)-ASA] and pyruvate to 4-hydroxy-tetrahydrodipicolinate (HTPA). The sequence is that of 4-hydroxy-tetrahydrodipicolinate synthase 1 from Halalkalibacterium halodurans (strain ATCC BAA-125 / DSM 18197 / FERM 7344 / JCM 9153 / C-125) (Bacillus halodurans).